A 428-amino-acid polypeptide reads, in one-letter code: MFVDQVKVYVKGGDGGNGMVAFRREKYVPKGGPAGGDGGNGGDVVFEVDEGLRTLMDFRYQRHFKAIRGEHGMSKNQHGRNADDMVVKVPPGTVVTDDDTKQVIADLTEHGQRAVIAKGGRGGRGNTRFATPANPAPQLSEHGEPGKERYIVLELKVLADVGLVGFPSVGKSTLLSVVSSAKPKIADYHFTTLVPNLGMVETDDGRSFVMADLPGLIEGAHEGVGLGHQFLRHIERTRVIVHVIDMSAMEGRDPYEDYVTINQELSEYNLRLTERPQIIVANKMDMPEAAENLKAFKEKLQDDHPVFPISAVTREGLRDLLFEVANQLETTPEFPLYDEEELAENRVMYTMEDEEIPFNITRDPDGAFVLSGDSLERLFKMTDFSRDESVKRFARQMRGMGVDEALRERGAKDGDIIRLLEFEFEFID.

Residues 1-158 (MFVDQVKVYV…RYIVLELKVL (158 aa)) form the Obg domain. The segment at 117 to 143 (AKGGRGGRGNTRFATPANPAPQLSEHG) is disordered. The region spanning 159–329 (ADVGLVGFPS…LLFEVANQLE (171 aa)) is the OBG-type G domain. GTP contacts are provided by residues 165–172 (GFPSVGKS), 190–194 (FTTLV), 212–215 (DLPG), 282–285 (NKMD), and 310–312 (SAV). 2 residues coordinate Mg(2+): Ser172 and Thr192. Residues 350-428 (TMEDEEIPFN…LLEFEFEFID (79 aa)) enclose the OCT domain.

It belongs to the TRAFAC class OBG-HflX-like GTPase superfamily. OBG GTPase family. In terms of assembly, monomer. It depends on Mg(2+) as a cofactor.

Its subcellular location is the cytoplasm. An essential GTPase which binds GTP, GDP and possibly (p)ppGpp with moderate affinity, with high nucleotide exchange rates and a fairly low GTP hydrolysis rate. Plays a role in control of the cell cycle, stress response, ribosome biogenesis and in those bacteria that undergo differentiation, in morphogenesis control. This is GTPase Obg from Bacillus velezensis (strain DSM 23117 / BGSC 10A6 / LMG 26770 / FZB42) (Bacillus amyloliquefaciens subsp. plantarum).